We begin with the raw amino-acid sequence, 67 residues long: ATP synthase F(0) complex subunit 8 (67 aa).

Residues 8 to 24 form a helical membrane-spanning segment; that stretch reads TWLIMILSMILTLFITF. Lys-54 is modified (N6-acetyllysine; alternate). The residue at position 54 (Lys-54) is an N6-succinyllysine; alternate. Lys-57 bears the N6-acetyllysine mark.

The protein belongs to the ATPase protein 8 family. As to quaternary structure, component of the ATP synthase complex composed at least of ATP5F1A/subunit alpha, ATP5F1B/subunit beta, ATP5MC1/subunit c (homooctomer), MT-ATP6/subunit a, MT-ATP8/subunit 8, ATP5ME/subunit e, ATP5MF/subunit f, ATP5MG/subunit g, ATP5MK/subunit k, ATP5MJ/subunit j, ATP5F1C/subunit gamma, ATP5F1D/subunit delta, ATP5F1E/subunit epsilon, ATP5PF/subunit F6, ATP5PB/subunit b, ATP5PD/subunit d, ATP5PO/subunit OSCP. ATP synthase complex consists of a soluble F(1) head domain (subunits alpha(3) and beta(3)) - the catalytic core - and a membrane F(0) domain - the membrane proton channel (subunits c, a, 8, e, f, g, k and j). These two domains are linked by a central stalk (subunits gamma, delta, and epsilon) rotating inside the F1 region and a stationary peripheral stalk (subunits F6, b, d, and OSCP). Interacts with PRICKLE3.

Its subcellular location is the mitochondrion membrane. Functionally, subunit 8, of the mitochondrial membrane ATP synthase complex (F(1)F(0) ATP synthase or Complex V) that produces ATP from ADP in the presence of a proton gradient across the membrane which is generated by electron transport complexes of the respiratory chain. ATP synthase complex consist of a soluble F(1) head domain - the catalytic core - and a membrane F(1) domain - the membrane proton channel. These two domains are linked by a central stalk rotating inside the F(1) region and a stationary peripheral stalk. During catalysis, ATP synthesis in the catalytic domain of F(1) is coupled via a rotary mechanism of the central stalk subunits to proton translocation. In vivo, can only synthesize ATP although its ATP hydrolase activity can be activated artificially in vitro. Part of the complex F(0) domain. The polypeptide is ATP synthase F(0) complex subunit 8 (Phoca vitulina (Harbor seal)).